Reading from the N-terminus, the 2290-residue chain is Protein Ycf2 (2290 aa).

Position 1638–1645 (1638–1645 (GSIGTGRS)) interacts with ATP.

This sequence belongs to the Ycf2 family.

The protein localises to the plastid. It localises to the chloroplast stroma. In terms of biological role, probable ATPase of unknown function. Its presence in a non-photosynthetic plant (Epifagus virginiana) and experiments in tobacco indicate that it has an essential function which is probably not related to photosynthesis. The chain is Protein Ycf2 from Phalaenopsis aphrodite subsp. formosana (Moth orchid).